The chain runs to 21 residues: Outer membrane protein P2 (21 aa).

Disulfide bond interactions within and between MOMP molecules and other components form high molecular-weight oligomers.

The protein resides in the cell outer membrane. Its function is as follows. Structural rigidity of the outer membrane of elementary bodies and porin forming, permitting diffusion of solutes through the intracellular reticulate body membrane. Binds carcinoembryonic antigen (CEA). This chain is Outer membrane protein P2, found in Glaesserella parasuis (Haemophilus parasuis).